We begin with the raw amino-acid sequence, 207 residues long: Ribosomal RNA small subunit methyltransferase G (207 aa).

Residues Gly73, Leu78, Val124–Glu125, and Arg139 each bind S-adenosyl-L-methionine.

Belongs to the methyltransferase superfamily. RNA methyltransferase RsmG family.

Its subcellular location is the cytoplasm. The enzyme catalyses guanosine(527) in 16S rRNA + S-adenosyl-L-methionine = N(7)-methylguanosine(527) in 16S rRNA + S-adenosyl-L-homocysteine. In terms of biological role, specifically methylates the N7 position of guanine in position 527 of 16S rRNA. The protein is Ribosomal RNA small subunit methyltransferase G of Salmonella schwarzengrund (strain CVM19633).